Reading from the N-terminus, the 156-residue chain is Enhancer of split M1 protein (156 aa).

The N-terminal stretch at 1-19 is a signal peptide; that stretch reads MMSQTLTLCCLGLVACVYG. Kazal-like domains follow at residues 23–81 and 96–156; these read STND…AWCS and KLEV…EEKC. Cystine bridges form between Cys-29/Cys-62, Cys-33/Cys-55, Cys-102/Cys-135, Cys-106/Cys-128, and Cys-114/Cys-156.

The protein is Enhancer of split M1 protein of Drosophila simulans (Fruit fly).